The sequence spans 555 residues: B3 domain-containing protein REM10 (555 aa).

DNA-binding regions (TF-B3) lie at residues 11–103, 150–247, 276–372, and 460–554; these read NPQF…LGPS, CFVA…FPMT, SFVA…LPLN, and SQNR…FCSK.

The protein resides in the nucleus. In Arabidopsis thaliana (Mouse-ear cress), this protein is B3 domain-containing protein REM10 (REM10).